We begin with the raw amino-acid sequence, 519 residues long: Cilia- and flagella-associated protein 157 (519 aa).

Positions 1–11 (MPPKKKGKRGP) are enriched in basic residues. Residues 1-25 (MPPKKKGKRGPSAKTKEKETVRVAS) are disordered. Coiled coils occupy residues 28–185 (VTEQ…EKKV) and 241–356 (IELI…QRTL).

This sequence belongs to the CFAP157 family.

The protein resides in the cytoplasm. The protein localises to the cytoskeleton. Its subcellular location is the cilium basal body. Its function is as follows. Specifically required during spermatogenesis for flagellum morphogenesis and sperm motility. The chain is Cilia- and flagella-associated protein 157 from Xenopus tropicalis (Western clawed frog).